A 203-amino-acid polypeptide reads, in one-letter code: Pyridoxal 5'-phosphate synthase subunit PdxT (203 aa).

Residue 54-56 (GES) coordinates L-glutamine. Residue Cys86 is the Nucleophile of the active site. Residues Arg113 and 141 to 142 (IR) each bind L-glutamine. Residues His177 and Glu179 each act as charge relay system in the active site.

The protein belongs to the glutaminase PdxT/SNO family. As to quaternary structure, in the presence of PdxS, forms a dodecamer of heterodimers. Only shows activity in the heterodimer.

The enzyme catalyses aldehydo-D-ribose 5-phosphate + D-glyceraldehyde 3-phosphate + L-glutamine = pyridoxal 5'-phosphate + L-glutamate + phosphate + 3 H2O + H(+). It carries out the reaction L-glutamine + H2O = L-glutamate + NH4(+). It participates in cofactor biosynthesis; pyridoxal 5'-phosphate biosynthesis. In terms of biological role, catalyzes the hydrolysis of glutamine to glutamate and ammonia as part of the biosynthesis of pyridoxal 5'-phosphate. The resulting ammonia molecule is channeled to the active site of PdxS. This chain is Pyridoxal 5'-phosphate synthase subunit PdxT, found in Halobacterium salinarum (strain ATCC 29341 / DSM 671 / R1).